The sequence spans 465 residues: Ribosomal oxygenase 2 (465 aa).

In terms of domain architecture, JmjC spans 139 to 271; that stretch reads QPQRFKDELW…NSWGDFLLDT (133 aa). Fe cation is bound by residues H179, D181, and H240. S309 carries the phosphoserine modification.

Belongs to the ROX family. MINA53 subfamily. Requires Fe(2+) as cofactor. As to expression, expressed in liver, skeletal muscle, heart, pancreas, and placenta. Not detected in brain, lung or kidney. Expressed in several lung cancer tissues, but is barely detected in the adjacent non-cancerous tissues. Also highly expressed in several esophageal squamous cell carcinoma (ESCC), and colon cancer tissues, and in various cancer cell lines.

The protein resides in the nucleus. It is found in the nucleolus. It carries out the reaction L-histidyl-[protein] + 2-oxoglutarate + O2 = (3S)-3-hydroxy-L-histidyl-[protein] + succinate + CO2. The catalysed reaction is L-histidyl-[ribosomal protein uL15] + 2-oxoglutarate + O2 = (3S)-3-hydroxy-L-histidyl-[ribosomal protein uL15] + succinate + CO2. Functionally, oxygenase that can act as both a histone lysine demethylase and a ribosomal histidine hydroxylase. Is involved in the demethylation of trimethylated 'Lys-9' on histone H3 (H3K9me3), leading to an increase in ribosomal RNA expression. Also catalyzes the hydroxylation of 60S ribosomal protein L27a on 'His-39'. May play an important role in cell growth and survival. May be involved in ribosome biogenesis, most likely during the assembly process of pre-ribosomal particles. This Homo sapiens (Human) protein is Ribosomal oxygenase 2.